Reading from the N-terminus, the 409-residue chain is Probable ferredoxin reductase CtmF (409 aa).

6 residues coordinate FAD: Ala-15, Asp-37, Lys-50, Val-83, Asp-279, and Val-298.

The protein belongs to the FAD-dependent oxidoreductase family. Requires FAD as cofactor.

It functions in the pathway terpene metabolism; monoterpene degradation. Functionally, involved in the degradation of the cyclic monoterpene limonene. Probably part of an electron transfer system involved in the oxidation of limonene to perillyl alcohol. The protein is Probable ferredoxin reductase CtmF of Castellaniella defragrans (strain DSM 12143 / CCUG 39792 / 65Phen) (Alcaligenes defragrans).